The sequence spans 308 residues: tRNA pseudouridine synthase B (308 aa).

The Nucleophile role is filled by D48.

It belongs to the pseudouridine synthase TruB family. Type 1 subfamily.

It carries out the reaction uridine(55) in tRNA = pseudouridine(55) in tRNA. In terms of biological role, responsible for synthesis of pseudouridine from uracil-55 in the psi GC loop of transfer RNAs. The sequence is that of tRNA pseudouridine synthase B from Histophilus somni (strain 129Pt) (Haemophilus somnus).